Here is a 379-residue protein sequence, read N- to C-terminus: Transcription termination factor 1a, mitochondrial (379 aa).

Residues 1-37 (MASRNIWCVRRNFLFDLRDWMLQYSAEVFLKSISFRP) constitute a mitochondrion transit peptide. Interaction with DNA regions lie at residues 151 to 152 (RS), 229 to 233 (QSTKR), 306 to 313 (SEKKFNDK), 337 to 340 (SINT), and 366 to 373 (SQRRYEAK).

Belongs to the mTERF family. Monomer. In terms of processing, phosphoprotein with mostly four phosphate groups. While the DNA-binding activity is unaffected by the phosphorylation state, only the phosphorylated form of the protein is active for termination activity. Functioning seems to be regulated by phosphorylation. As to expression, predominantly expressed in heart and liver, with extremely low levels in other tissues. Expressed strongly in the heart and at lower levels in brain, liver and kidney.

Its subcellular location is the mitochondrion. In terms of biological role, transcription termination factor. Binds to a 28 bp region within the tRNA(Leu(uur)) gene at a position immediately adjacent to and downstream of the 16S rRNA gene; this region comprises a tridecamer sequence critical for directing accurate termination. Binds DNA along the major grove and promotes DNA bending and partial unwinding. Promotes base flipping. Transcription termination activity appears to be polarized with highest specificity for transcripts initiated on the light strand. In Mus musculus (Mouse), this protein is Transcription termination factor 1a, mitochondrial (Mterf1a).